The primary structure comprises 391 residues: Ferrochelatase (391 aa).

Fe cation-binding residues include His196 and Glu281.

The protein belongs to the ferrochelatase family.

The protein resides in the cytoplasm. The catalysed reaction is heme b + 2 H(+) = protoporphyrin IX + Fe(2+). Its pathway is porphyrin-containing compound metabolism; protoheme biosynthesis; protoheme from protoporphyrin-IX: step 1/1. Catalyzes the ferrous insertion into protoporphyrin IX. This chain is Ferrochelatase, found in Prochlorococcus marinus (strain NATL2A).